Consider the following 193-residue polypeptide: MIKISKKAKKYIIKLLSKQELGTNIRIFVDSPGTMYAECGMAYCDMNDIDKKNDHKFSFDFFDVYIHKLMLPFLKDSIIDLVKNDLGTKITLKAPYAKILNKSKNFSQLQNSIKNFLTTQINPKLLLHGGSVALYDITDSGVVFLKFSGGCNGCSMIDITLKKGIEKKLIKNFPEISSVEDVTHHISGKHSYY.

The [4Fe-4S] cluster site is built by cysteine 151 and cysteine 154.

Belongs to the NfuA family. As to quaternary structure, homodimer. The cofactor is [4Fe-4S] cluster.

Its function is as follows. Involved in iron-sulfur cluster biogenesis. Binds a 4Fe-4S cluster, can transfer this cluster to apoproteins, and thereby intervenes in the maturation of Fe/S proteins. Could also act as a scaffold/chaperone for damaged Fe/S proteins. This chain is Fe/S biogenesis protein NfuA, found in Buchnera aphidicola subsp. Cinara cedri (strain Cc).